The following is a 124-amino-acid chain: Small ribosomal subunit protein uS12 (124 aa).

3-methylthioaspartic acid is present on Asp89.

It belongs to the universal ribosomal protein uS12 family. Part of the 30S ribosomal subunit. Contacts proteins S8 and S17. May interact with IF1 in the 30S initiation complex.

With S4 and S5 plays an important role in translational accuracy. In terms of biological role, interacts with and stabilizes bases of the 16S rRNA that are involved in tRNA selection in the A site and with the mRNA backbone. Located at the interface of the 30S and 50S subunits, it traverses the body of the 30S subunit contacting proteins on the other side and probably holding the rRNA structure together. The combined cluster of proteins S8, S12 and S17 appears to hold together the shoulder and platform of the 30S subunit. This is Small ribosomal subunit protein uS12 from Campylobacter hominis (strain ATCC BAA-381 / DSM 21671 / CCUG 45161 / LMG 19568 / NCTC 13146 / CH001A).